The following is a 155-amino-acid chain: MSKKGGYKGVQVDHRYNDESVARFINAVMLDGKKDVATKIVYDAFAIIGEKMVDENPLEVYRRAMSNIAPVVEVRSKRVGGATYQIPMEVKPSRRGALAFRWLKQYATKRGGRSMAEKLAAELMDAASEQGASVKKRDEVHRMADANKAFAHFRF.

It belongs to the universal ribosomal protein uS7 family. As to quaternary structure, part of the 30S ribosomal subunit. Contacts proteins S9 and S11.

Its function is as follows. One of the primary rRNA binding proteins, it binds directly to 16S rRNA where it nucleates assembly of the head domain of the 30S subunit. Is located at the subunit interface close to the decoding center, probably blocks exit of the E-site tRNA. The polypeptide is Small ribosomal subunit protein uS7 (Chlorobium luteolum (strain DSM 273 / BCRC 81028 / 2530) (Pelodictyon luteolum)).